The chain runs to 248 residues: Large ribosomal subunit protein uL30A (248 aa).

Residues 1-44 are disordered; that stretch reads MSQKKQKIQVEQKVPENVAKKTQRDSKLRDAVAKRRTERLAANK. Basic and acidic residues predominate over residues 8–41; sequence IQVEQKVPENVAKKTQRDSKLRDAVAKRRTERLA.

This sequence belongs to the universal ribosomal protein uL30 family.

Functionally, binds to G-rich structures in 28S rRNA and in mRNAs. Plays a regulatory role in the translation apparatus; inhibits cell-free translation of mRNAs. This chain is Large ribosomal subunit protein uL30A (Rpl7-1), found in Paramecium tetraurelia.